A 249-amino-acid chain; its full sequence is LexA repressor (249 aa).

Positions 1–25 (MAAAATGGRATSQPKKTTKGLTPRQ) are disordered. Positions 45-65 (MREIGDTVGLASLSSVTHQLS) form a DNA-binding region, H-T-H motif. Active-site for autocatalytic cleavage activity residues include S173 and K210.

This sequence belongs to the peptidase S24 family. As to quaternary structure, homodimer.

The catalysed reaction is Hydrolysis of Ala-|-Gly bond in repressor LexA.. Its function is as follows. Represses a number of genes involved in the response to DNA damage (SOS response), including recA and lexA. In the presence of single-stranded DNA, RecA interacts with LexA causing an autocatalytic cleavage which disrupts the DNA-binding part of LexA, leading to derepression of the SOS regulon and eventually DNA repair. This Pseudarthrobacter chlorophenolicus (strain ATCC 700700 / DSM 12829 / CIP 107037 / JCM 12360 / KCTC 9906 / NCIMB 13794 / A6) (Arthrobacter chlorophenolicus) protein is LexA repressor.